A 144-amino-acid chain; its full sequence is Maximins 6/Hv (144 aa).

An N-terminal signal peptide occupies residues 1 to 18 (MNFKYIVAVSFLIASGYA). Residues 19–43 (RSEENDVQSLSQREVLEEETLREIR) constitute a propeptide that is removed on maturation. Asn70 is subject to Asparagine amide. The propeptide occupies 74–123 (TAKGHEVMKRLEAVMRDLDSLDHPEEASERETRGFNQEEIANLFTKKEKR). An Isoleucine amide modification is found at Ile143.

The protein belongs to the bombinin family. Expressed by the skin glands.

It localises to the secreted. Functionally, shows antimicrobial activity against bacteria and against the fungus C.albicans. It has little hemolytic activity. Its function is as follows. Shows antimicrobial activity against bacteria and against the fungus C.albicans. Shows strong hemolytic activity. The chain is Maximins 6/Hv from Bombina maxima (Giant fire-bellied toad).